Reading from the N-terminus, the 250-residue chain is Small ribosomal subunit protein uS3 (250 aa).

The KH type-2 domain occupies 39-111 (IRTLIKNNYP…KVQINIFEVK (73 aa)).

This sequence belongs to the universal ribosomal protein uS3 family. In terms of assembly, part of the 30S ribosomal subunit. Forms a tight complex with proteins S10 and S14.

Functionally, binds the lower part of the 30S subunit head. Binds mRNA in the 70S ribosome, positioning it for translation. In Alder yellows phytoplasma, this protein is Small ribosomal subunit protein uS3.